The following is a 318-amino-acid chain: MKNNYLANLIKTLQAIVVSVALLAPLVLPSAVNAFPVYAQQAYENPREATGRIVCANCHLAQKPVEIEVPQGVLPDTVFEAKVEIPYDLSVKQVTGDGTKGPLNVGAVLILPEGFTLAPKDRLTPEMKEKTKGVVISPYSDSKKSIFVVGPIPGAEHQTIIFPILAPNPADNKNVHFIKYPVFVGANRGRGQVNPTGDKSNNTLYSSPVEGRLTKIEKTEKGGYILTIQSKSGDPLTINVPVGPELVVKEGQKVTADQALTVDPNVGGFGQTETEIVLQSPARVKGLIAFFFTVILAQILLVLKKKQFEKVQLAEMNF.

An N-terminal signal peptide occupies residues 1 to 34 (MKNNYLANLIKTLQAIVVSVALLAPLVLPSAVNA). The heme site is built by phenylalanine 35, cysteine 55, cysteine 58, and histidine 59. The helical transmembrane segment at 284-304 (VKGLIAFFFTVILAQILLVLK) threads the bilayer.

It belongs to the cytochrome f family. As to quaternary structure, the 4 large subunits of the cytochrome b6-f complex are cytochrome b6, subunit IV (17 kDa polypeptide, petD), cytochrome f and the Rieske protein, while the 4 small subunits are PetG, PetL, PetM and PetN. The complex functions as a dimer. The cofactor is heme.

The protein localises to the plastid. It is found in the chloroplast thylakoid membrane. Its function is as follows. Component of the cytochrome b6-f complex, which mediates electron transfer between photosystem II (PSII) and photosystem I (PSI), cyclic electron flow around PSI, and state transitions. The protein is Cytochrome f of Rhodomonas salina (Cryptomonas salina).